The following is a 363-amino-acid chain: MVLKQRANYLGFLIVFFTAFLVEAVPIKRQSNSTVDSLPPLIPSRTSAPSSSPSTTDPEAPAMSRNGPLPSDVETKYGMALNATSYPDSVVQAMSIDGGIRAATSQEINELTYYTTLSANSYCRTVIPGATWDCIHCDATEDLKIIKTWSTLIYDTNAMVARGDSEKTIYIVFRGSSSIRNWIADLTFVPVSYPPVSGTKVHKGFLDSYGEVQNELVATVLDQFKQYPSYKVAVTGHSLGGATALLCALDLYQREEGLSSSNLFLYTQGQPRVGDPAFANYVVSTGIPYRRTVNERDIVPHLPPAAFGFLHAGEEYWITDNSPETVQVCTSDLETSDCSNSIVPFTSVLDHLSYFGINTGLCT.

A signal peptide spans 1 to 24 (MVLKQRANYLGFLIVFFTAFLVEA). The propeptide occupies 25–94 (VPIKRQSNST…SYPDSVVQAM (70 aa)). The interval 33 to 69 (STVDSLPPLIPSRTSAPSSSPSTTDPEAPAMSRNGPL) is disordered. Over residues 43–62 (PSRTSAPSSSPSTTDPEAPA) the composition is skewed to low complexity. Intrachain disulfides connect Cys-123–Cys-362, Cys-134–Cys-137, and Cys-329–Cys-338. Ser-238 acts as the Nucleophile in catalysis. Asp-297 (charge relay system) is an active-site residue. Residue Asp-350 coordinates Ca(2+). The Charge relay system role is filled by His-351.

Belongs to the AB hydrolase superfamily. Lipase family.

The enzyme catalyses a triacylglycerol + H2O = a diacylglycerol + a fatty acid + H(+). The polypeptide is Lipase (Rhizomucor miehei).